Here is an 81-residue protein sequence, read N- to C-terminus: Costars family protein ABRACL (81 aa).

At Met-1 the chain carries N-acetylmethionine.

It belongs to the costars family.

This chain is Costars family protein ABRACL (ABRACL), found in Homo sapiens (Human).